Consider the following 308-residue polypeptide: Adult enhancer factor 1 (308 aa).

Disordered stretches follow at residues 50–94 (AHMA…PLPF) and 123–143 (QAAA…THLT). Low complexity predominate over residues 56-76 (QQQQQQQQQQQQQHHQQQQQQ). Positions 81 to 90 (PSVPPPPTEL) are enriched in pro residues. 4 C2H2-type zinc fingers span residues 184-206 (FHCT…VKIH), 212-234 (YKCN…LKIH), 240-262 (YNCN…VKIH), and 268-290 (FECV…IKIH).

In terms of tissue distribution, found in all tissues examined including the ovary and the fat body.

Its subcellular location is the nucleus. In terms of biological role, transcriptional repressor that binds specifically to fat body-specific enhancers, namely the adult ADH enhancer (AAE) and the enhancer that controls yolk protein gene expression. This chain is Adult enhancer factor 1 (Aef1), found in Drosophila melanogaster (Fruit fly).